The following is a 155-amino-acid chain: Ribonuclease H (155 aa).

Residues D9–E150 enclose the RNase H type-1 domain. Mg(2+) is bound by residues D18, E56, D78, and D142.

The protein belongs to the RNase H family. Monomer. The cofactor is Mg(2+).

The protein resides in the cytoplasm. The catalysed reaction is Endonucleolytic cleavage to 5'-phosphomonoester.. Its function is as follows. Endonuclease that specifically degrades the RNA of RNA-DNA hybrids. The chain is Ribonuclease H from Bordetella bronchiseptica (strain ATCC BAA-588 / NCTC 13252 / RB50) (Alcaligenes bronchisepticus).